A 257-amino-acid polypeptide reads, in one-letter code: 3-dehydroquinate dehydratase (257 aa).

3-dehydroquinate-binding positions include 50-52 (EWR) and Arg86. The Proton donor/acceptor role is filled by His147. Lys174 acts as the Schiff-base intermediate with substrate in catalysis. Positions 216, 235, and 239 each coordinate 3-dehydroquinate.

Belongs to the type-I 3-dehydroquinase family. Homodimer.

It carries out the reaction 3-dehydroquinate = 3-dehydroshikimate + H2O. It participates in metabolic intermediate biosynthesis; chorismate biosynthesis; chorismate from D-erythrose 4-phosphate and phosphoenolpyruvate: step 3/7. In terms of biological role, involved in the third step of the chorismate pathway, which leads to the biosynthesis of aromatic amino acids. Catalyzes the cis-dehydration of 3-dehydroquinate (DHQ) and introduces the first double bond of the aromatic ring to yield 3-dehydroshikimate. This is 3-dehydroquinate dehydratase from Geobacillus thermodenitrificans (strain NG80-2).